The following is a 494-amino-acid chain: MANYFNTLSLRQQLDQIGRCRFMQRSEFSEGCDFLKGKKIVIVGCGAQGLNQGLNMRDSGLDVAYALRQAAIDEKRDSFQRASGNGFTVGTYKELIPSADLVYNLTPDKQHSSVVEAIMPLMKEGASLGYSHGFNIVEEGQQIRSDITVVMCAPKCPGTEVREEYKRGFGVPTLIAVHPENDPQQQGWDIAKALASATGGDRAGVLESSFVAEVKSDLMGEQTILCGMQQAAAVLGYEKMVADGIDPAYAGALIQFGLEAITEALKIGGVTNMMDRLSNPAKIKAFDLSEQLKDMLKPLFGKHQDDIISGEFSRTMMEDWANGDANLLKWREETGQTGFENAPEYNGKIDEQEFFDNGVFIVAMIKAGVELAFDVMVEAGILPESAYYESLHETPLISNTIARKRLYEMNVVISDTAEYGNYLFANAAIPLLADKLMPSIGTELIGKPFAAASNSVDNKTLVAVNKAIREHGVESVGDTLRGYMTDMKAIVEAV.

Positions 14-208 constitute a KARI N-terminal Rossmann domain; sequence LDQIGRCRFM…GGDRAGVLES (195 aa). Residues 45 to 48, Arg-68, Arg-76, Ser-78, and 108 to 110 contribute to the NADP(+) site; these read CGAQ and DKQ. His-132 is a catalytic residue. Gly-158 lines the NADP(+) pocket. KARI C-terminal knotted domains are found at residues 209–344 and 345–487; these read SFVA…NAPE and YNGK…MTDM. 4 residues coordinate Mg(2+): Asp-217, Glu-221, Glu-389, and Glu-393. Ser-414 contributes to the substrate binding site.

Belongs to the ketol-acid reductoisomerase family. The cofactor is Mg(2+).

It carries out the reaction (2R)-2,3-dihydroxy-3-methylbutanoate + NADP(+) = (2S)-2-acetolactate + NADPH + H(+). The enzyme catalyses (2R,3R)-2,3-dihydroxy-3-methylpentanoate + NADP(+) = (S)-2-ethyl-2-hydroxy-3-oxobutanoate + NADPH + H(+). The protein operates within amino-acid biosynthesis; L-isoleucine biosynthesis; L-isoleucine from 2-oxobutanoate: step 2/4. It participates in amino-acid biosynthesis; L-valine biosynthesis; L-valine from pyruvate: step 2/4. In terms of biological role, involved in the biosynthesis of branched-chain amino acids (BCAA). Catalyzes an alkyl-migration followed by a ketol-acid reduction of (S)-2-acetolactate (S2AL) to yield (R)-2,3-dihydroxy-isovalerate. In the isomerase reaction, S2AL is rearranged via a Mg-dependent methyl migration to produce 3-hydroxy-3-methyl-2-ketobutyrate (HMKB). In the reductase reaction, this 2-ketoacid undergoes a metal-dependent reduction by NADPH to yield (R)-2,3-dihydroxy-isovalerate. This chain is Ketol-acid reductoisomerase (NADP(+)), found in Pseudoalteromonas atlantica (strain T6c / ATCC BAA-1087).